We begin with the raw amino-acid sequence, 279 residues long: Acetyl-coenzyme A carboxylase carboxyl transferase subunit beta (279 aa).

A CoA carboxyltransferase N-terminal domain is found at 23-279; it reads LWSKCDECGA…LIKLFKHLRG (257 aa). Zn(2+)-binding residues include cysteine 27, cysteine 30, cysteine 46, and cysteine 49. Residues 27-49 form a C4-type zinc finger; sequence CDECGAALHKKQLEDHLYTCPEC.

Belongs to the AccD/PCCB family. As to quaternary structure, acetyl-CoA carboxylase is a heterohexamer composed of biotin carboxyl carrier protein (AccB), biotin carboxylase (AccC) and two subunits each of ACCase subunit alpha (AccA) and ACCase subunit beta (AccD). Zn(2+) is required as a cofactor.

It is found in the cytoplasm. The catalysed reaction is N(6)-carboxybiotinyl-L-lysyl-[protein] + acetyl-CoA = N(6)-biotinyl-L-lysyl-[protein] + malonyl-CoA. It participates in lipid metabolism; malonyl-CoA biosynthesis; malonyl-CoA from acetyl-CoA: step 1/1. Component of the acetyl coenzyme A carboxylase (ACC) complex. Biotin carboxylase (BC) catalyzes the carboxylation of biotin on its carrier protein (BCCP) and then the CO(2) group is transferred by the transcarboxylase to acetyl-CoA to form malonyl-CoA. The polypeptide is Acetyl-coenzyme A carboxylase carboxyl transferase subunit beta (Chlorobaculum parvum (strain DSM 263 / NCIMB 8327) (Chlorobium vibrioforme subsp. thiosulfatophilum)).